We begin with the raw amino-acid sequence, 373 residues long: Nuclear migration protein JNM1 (373 aa).

Residues 33–53 form a disordered region; it reads EVKEDGQQEEQEEASSRKDGL. Ser91 is subject to Phosphoserine. Coiled-coil stretches lie at residues 114–139, 200–245, and 331–367; these read KIEN…LATE, EDRK…EFEN, and WLKA…EDEA.

Component of the dynactin complex composed of at least ARP1, JNM1, NIP100 and ARP10. Dynactin comprises a short rod of ARP1 polymers attached to ARP10 at its pointed-end and probably associated with the capping protein at its barbed-end. The rod structure is implicated in dynein cargo binding. A sidearm formed by NIP100 projects from the ARP1 filament and is implicated in motor binding. Interacts with ARP1.

The protein resides in the cytoplasm. The protein localises to the cytoskeleton. In terms of biological role, component of the dynactin complex which assists cytoplasmic dynein by increasing its processivity and by regulation of its cargo binding. The dynactin complex is required for the spindle translocation late in anaphase and is involved in a cell wall synthesis checkpoint. JNM1 is associated with the rod and links it to the projecting sidearm. Required for proper nuclear migration during the mitotic cell cycle and for astral microtubule development. This Saccharomyces cerevisiae (strain ATCC 204508 / S288c) (Baker's yeast) protein is Nuclear migration protein JNM1 (JNM1).